A 114-amino-acid chain; its full sequence is Nucleoid-associated protein THEYE_A1069 (114 aa).

The protein belongs to the YbaB/EbfC family. Homodimer.

Its subcellular location is the cytoplasm. The protein resides in the nucleoid. In terms of biological role, binds to DNA and alters its conformation. May be involved in regulation of gene expression, nucleoid organization and DNA protection. This Thermodesulfovibrio yellowstonii (strain ATCC 51303 / DSM 11347 / YP87) protein is Nucleoid-associated protein THEYE_A1069.